A 274-amino-acid polypeptide reads, in one-letter code: uncharacterized protein (274 aa).

A signal peptide spans 1–30; sequence MTVYTPTSERQAPATTHRQMWALGDYAAIA.

The protein to M.tuberculosis Rv1405c.

This is an uncharacterized protein from Mycobacterium tuberculosis (strain CDC 1551 / Oshkosh).